The sequence spans 448 residues: Mitochondrial distribution and morphology protein 10 (448 aa).

It belongs to the MDM10 family. In terms of assembly, component of the ER-mitochondria encounter structure (ERMES) or MDM complex, composed of MMM1, MDM10, MDM12 and MDM34. Associates with the mitochondrial outer membrane sorting assembly machinery SAM(core) complex.

It localises to the mitochondrion outer membrane. Its function is as follows. Component of the ERMES/MDM complex, which serves as a molecular tether to connect the endoplasmic reticulum and mitochondria. Components of this complex are involved in the control of mitochondrial shape and protein biogenesis and may function in phospholipid exchange. MDM10 is involved in the late assembly steps of the general translocase of the mitochondrial outer membrane (TOM complex). Functions in the TOM40-specific route of the assembly of outer membrane beta-barrel proteins, including the association of TOM40 with the receptor TOM22 and small TOM proteins. Can associate with the SAM(core) complex as well as the MDM12-MMM1 complex, both involved in late steps of the major beta-barrel assembly pathway, that is responsible for biogenesis of all outer membrane beta-barrel proteins. May act as a switch that shuttles between both complexes and channels precursor proteins into the TOM40-specific pathway. Plays a role in mitochondrial morphology and in the inheritance of mitochondria. This chain is Mitochondrial distribution and morphology protein 10, found in Zygosaccharomyces rouxii (strain ATCC 2623 / CBS 732 / NBRC 1130 / NCYC 568 / NRRL Y-229).